Here is a 346-residue protein sequence, read N- to C-terminus: Nitrilase 1 (346 aa).

The residue at position 2 (Ser2) is an N-acetylserine. In terms of domain architecture, CN hydrolase spans 25-297; that stretch reads VRVTIVQSST…EGLVTADIDL (273 aa). Glu65 (proton acceptor) is an active-site residue. Lys152 functions as the Proton donor in the catalytic mechanism. Cys186 serves as the catalytic Nucleophile.

The protein belongs to the carbon-nitrogen hydrolase superfamily. Nitrilase family. As to quaternary structure, interacts with DEK3. Expressed in cotyledons, hypocotyls, leaves, roots, stems, flowers and siliques.

It catalyses the reaction a nitrile + 2 H2O = a carboxylate + NH4(+). Functionally, can convert indole-3-acetonitrile to the plant hormone indole-3-acetic acid. The protein is Nitrilase 1 of Arabidopsis thaliana (Mouse-ear cress).